The following is a 215-amino-acid chain: Ras-related protein Rab-5A (215 aa).

Residues Ser29, Ala30, Gly32, Lys33, Ser34, Ser35, His46, Glu47, Thr52, and Gly78 each contribute to the GTP site. Position 34 (Ser34) interacts with Mg(2+). Short sequence motifs (switch) lie at residues 44-56 and 77-93; these read QFHEFQESTIGAA and AGQERYHSLAPMYYRGA. Thr52 is a binding site for Mg(2+). Phosphoserine; by LRRK2 is present on Ser84. The (Microbial infection) N-beta-linked (GlcNAc) arginine glycan is linked to Arg120. Asn133, Lys134, Asp136, Ala164, and Lys165 together coordinate GTP. A disordered region spans residues 181–215; that stretch reads LPKNEPQNPGANSARGRGVDLTEPTQPTRNQCCSN. The segment covering 203–215 has biased composition (polar residues); it reads EPTQPTRNQCCSN. S-geranylgeranyl cysteine attachment occurs at residues Cys212 and Cys213.

This sequence belongs to the small GTPase superfamily. Rab family. As to quaternary structure, interacts with SGSM1 and SGSM3. Interacts with PIK3CB. Interacts with GDI1; this promotes dissociation from membranes; phosphorylation at Ser-84 disrupts this interaction. Interacts with GDI2; phosphorylation at Ser-84 disrupts the interaction. Interacts with EEA1. Interacts with RIN1 and GAPVD1, which regulate its pathway, probably by acting as a GEF. Interacts with RINL. Interacts with ALS2CL, SUN2, ZFYVE20 and RUFY1. Interacts with RABEP1; one RABEP1 homodimer binds two RAB5A chains, but at opposite sides of the dimer. Interacts with OCRL. Interacts with INPP5F. May be a component of a complex composed of RAB5A, DYN2 and PIK3C3. Does not interact with BLOC-3 complex (heterodimer of HPS1 and HPS4). Interacts with CLN5. Interacts with APPL2. Interacts with F8A1/F8A2/F8A3. Found in a complex with F8A1/F8A2/F8A3, HTT and RAB5A; mediates the recruitment of HTT by RAB5A onto early endosomes. Interacts with ATP9A. Interacts with PPP1R21; mediates the recruitment of FERRY complex by RAB5A onto early endosomes. Mg(2+) is required as a cofactor. In terms of processing, phosphorylation of Ser-84 in the switch II region by LRRK2 prevents the association of RAB regulatory proteins, including RAB GDP dissociation inhibitors GDI1 and GDI2. Post-translationally, (Microbial infection) Glycosylated on arginine residues by S.typhimurium protein Ssek3.

It is found in the cell membrane. It localises to the early endosome membrane. Its subcellular location is the melanosome. The protein resides in the cytoplasmic vesicle. The protein localises to the cell projection. It is found in the ruffle. It localises to the membrane. Its subcellular location is the cytoplasm. The protein resides in the cytosol. The protein localises to the phagosome membrane. It is found in the endosome membrane. It carries out the reaction GTP + H2O = GDP + phosphate + H(+). Regulated by guanine nucleotide exchange factors (GEFs) including RINL, which promote the exchange of bound GDP for free GTP. Regulated by GTPase activating proteins (GAPs) which increase the GTP hydrolysis activity. Inhibited by GDP dissociation inhibitors (GDIs). Functionally, the small GTPases Rab are key regulators of intracellular membrane trafficking, from the formation of transport vesicles to their fusion with membranes. Rabs cycle between an inactive GDP-bound form and an active GTP-bound form that is able to recruit to membranes different sets of downstream effectors directly responsible for vesicle formation, movement, tethering and fusion. RAB5A is required for the fusion of plasma membranes and early endosomes. Contributes to the regulation of filopodia extension. Required for the exosomal release of SDCBP, CD63, PDCD6IP and syndecan. Regulates maturation of apoptotic cell-containing phagosomes, probably downstream of DYN2 and PIK3C3. This chain is Ras-related protein Rab-5A, found in Homo sapiens (Human).